The chain runs to 89 residues: Signal recognition particle 19 kDa protein (89 aa).

The protein belongs to the SRP19 family. Part of the signal recognition particle protein translocation system, which is composed of SRP and FtsY. Archaeal SRP consists of a 7S RNA molecule of 300 nucleotides and two protein subunits: SRP54 and SRP19.

It localises to the cytoplasm. Its function is as follows. Involved in targeting and insertion of nascent membrane proteins into the cytoplasmic membrane. Binds directly to 7S RNA and mediates binding of the 54 kDa subunit of the SRP. The chain is Signal recognition particle 19 kDa protein from Methanococcus maripaludis (strain C5 / ATCC BAA-1333).